Reading from the N-terminus, the 150-residue chain is MQLLSPAFAYGAPIPKKYTCQGAGISPPLTFVDVPGAAQSLALIVEDPDVPKEIRSDGLWIHWIVYNLSTTITNLAEGAEIFAVQGLNTSGKPVYEGPCPPDKQHRYFFTLFALDVVLPEEENVTRDQLYEAMEFHIIEQAELMGTYEKS.

It belongs to the UPF0098 family.

The chain is UPF0098 protein CPn_0877/CP_0992/CPj0877/CpB0906 from Chlamydia pneumoniae (Chlamydophila pneumoniae).